The following is a 229-amino-acid chain: Cell division topological specificity factor homolog, chloroplastic (229 aa).

The transit peptide at 1-30 directs the protein to the chloroplast; sequence MAMSSGTLRISATLVSPYHHHHRNRLSLPS. Residues 35-141 form an interaction with MIND1 region; the sequence is VDFTGFISNG…KMILFSDRCD (107 aa). The homodimerization stretch occupies residues 142 to 169; sequence VSDEAKRKIVNNIIHALSDFVEIESEEK.

This sequence belongs to the MinE family. In terms of assembly, homodimer. Interacts with MIND1. These interactions are required for proper intraplastidic localization. Binds to ARC3. Expressed in green tissues, especially at the shoot apex. Also present in leaves, stems, buds, and flowers, especially in sepals, siliques (tip and base), and anthers (mostly in pollen grains).

The protein resides in the plastid. It is found in the chloroplast. Functionally, acts as a topological specificity factor during plastid division and specify plastid constriction sites (such as the Z-ring) in a MCD1-dependent manner. Especially involved in epidermal plastids division in a FTSZ1-dependent manner. Required for the proper formation of FtsZ rings at the division site in nongreen plastids (e.g. etioplasts). May contribute to gravitropism in stems and hypocotyls. Stimulates MIND1 ATPase activity. In cooperation with MIND1, prevents FtsZ ring formation anywhere outside of the mid-plastids. The chain is Cell division topological specificity factor homolog, chloroplastic from Arabidopsis thaliana (Mouse-ear cress).